Consider the following 456-residue polypeptide: Bifunctional protein GlmU (456 aa).

Residues 1-229 (MSNSSMSVVI…LSEVEGVNNR (229 aa)) are pyrophosphorylase. UDP-N-acetyl-alpha-D-glucosamine-binding positions include 11–14 (LAAG), lysine 25, glutamine 76, 81–82 (GT), 103–105 (YGD), glycine 140, glutamate 154, asparagine 169, and asparagine 227. Aspartate 105 lines the Mg(2+) pocket. Residue asparagine 227 participates in Mg(2+) binding. Positions 230 to 250 (LQLAALERVYQSEQAEKLLLA) are linker. The segment at 251-456 (GVMLLDPARF…QGWQRPIKKK (206 aa)) is N-acetyltransferase. Positions 333 and 351 each coordinate UDP-N-acetyl-alpha-D-glucosamine. Histidine 363 functions as the Proton acceptor in the catalytic mechanism. Positions 366 and 377 each coordinate UDP-N-acetyl-alpha-D-glucosamine. Residues alanine 380, 386–387 (NY), serine 405, alanine 423, and arginine 440 each bind acetyl-CoA.

This sequence in the N-terminal section; belongs to the N-acetylglucosamine-1-phosphate uridyltransferase family. In the C-terminal section; belongs to the transferase hexapeptide repeat family. In terms of assembly, homotrimer. The cofactor is Mg(2+).

Its subcellular location is the cytoplasm. It catalyses the reaction alpha-D-glucosamine 1-phosphate + acetyl-CoA = N-acetyl-alpha-D-glucosamine 1-phosphate + CoA + H(+). It carries out the reaction N-acetyl-alpha-D-glucosamine 1-phosphate + UTP + H(+) = UDP-N-acetyl-alpha-D-glucosamine + diphosphate. Its pathway is nucleotide-sugar biosynthesis; UDP-N-acetyl-alpha-D-glucosamine biosynthesis; N-acetyl-alpha-D-glucosamine 1-phosphate from alpha-D-glucosamine 6-phosphate (route II): step 2/2. It participates in nucleotide-sugar biosynthesis; UDP-N-acetyl-alpha-D-glucosamine biosynthesis; UDP-N-acetyl-alpha-D-glucosamine from N-acetyl-alpha-D-glucosamine 1-phosphate: step 1/1. The protein operates within bacterial outer membrane biogenesis; LPS lipid A biosynthesis. Its function is as follows. Catalyzes the last two sequential reactions in the de novo biosynthetic pathway for UDP-N-acetylglucosamine (UDP-GlcNAc). The C-terminal domain catalyzes the transfer of acetyl group from acetyl coenzyme A to glucosamine-1-phosphate (GlcN-1-P) to produce N-acetylglucosamine-1-phosphate (GlcNAc-1-P), which is converted into UDP-GlcNAc by the transfer of uridine 5-monophosphate (from uridine 5-triphosphate), a reaction catalyzed by the N-terminal domain. The sequence is that of Bifunctional protein GlmU from Yersinia enterocolitica serotype O:8 / biotype 1B (strain NCTC 13174 / 8081).